A 323-amino-acid polypeptide reads, in one-letter code: Secreted frizzled-related protein 3 (323 aa).

An N-terminal signal peptide occupies residues 1–32 (MVCCGPGRMLLGWAGLLVLAALCLLQVPGAQA). The 118-residue stretch at 33–150 (AACEPVRIPL…VYDRGVCISP (118 aa)) folds into the FZ domain. Disulfide bonds link Cys-35–Cys-96, Cys-43–Cys-89, Cys-80–Cys-119, Cys-108–Cys-147, and Cys-112–Cys-136. N-linked (GlcNAc...) asparagine glycosylation occurs at Asn-49. The NTR domain maps to 178–298 (CKCKPVRATQ…WDMKLRHLGL (121 aa)). The disordered stretch occupies residues 299 to 323 (GKTDASDSTQNQKSGRNSNPRPARS). Polar residues predominate over residues 304–323 (SDSTQNQKSGRNSNPRPARS).

It belongs to the secreted frizzled-related protein (sFRP) family. In terms of assembly, interacts with MYOC. Expressed in kidney, brain, testis. Weak expression in spleen and heart.

The protein resides in the secreted. Its function is as follows. Soluble frizzled-related proteins (sFRPS) function as modulators of Wnt signaling through direct interaction with Wnts. They have a role in regulating cell growth and differentiation in specific cell types. SFRP3/FRZB appears to be involved in limb skeletogenesis. Antagonist of Wnt8 signaling. Regulates chondrocyte maturation and long bone development. The chain is Secreted frizzled-related protein 3 (Frzb) from Mus musculus (Mouse).